The sequence spans 81 residues: Large ribosomal subunit protein eL31 (81 aa).

It belongs to the eukaryotic ribosomal protein eL31 family.

This Methanothermobacter thermautotrophicus (strain ATCC 29096 / DSM 1053 / JCM 10044 / NBRC 100330 / Delta H) (Methanobacterium thermoautotrophicum) protein is Large ribosomal subunit protein eL31 (rpl31e).